Here is a 352-residue protein sequence, read N- to C-terminus: DNA ADP-ribosyl glycohydrolase (352 aa).

Positions 1–155 constitute a Macro domain; it reads MITYGSGDLL…IYPPSGGSRA (155 aa). ADP-D-ribose-binding positions include 8 to 9, 20 to 22, 31 to 34, and Thr79; these read DL, TVN, and IALQ. Lys80 acts as the Nucleophile in catalysis. 117–121 is an ADP-D-ribose binding site; the sequence is GVGNG. The segment at 164–352 is interaction with DarT; sequence MTWGRAVILE…VALDRILMTA (189 aa).

The protein belongs to the DarG ADP-ribosyl glycohydrolase family. As to quaternary structure, interacts (via C-terminus) with cognate toxin DarT; this heterodimeric complex neutralizes the toxic effect of DarT by preventing ssDNA binding to DarT and consequently inactivating the toxin by direct protein-protein interactions.

The enzyme catalyses an N-(ADP-alpha-D-ribosyl)-thymidine in DNA + H2O = a thymidine in DNA + ADP-D-ribose. Antitoxin component of the hybrid type II/IV toxin-antitoxin (TA) system DarTG, which plays a crucial role in controlling bacterial growth and bacteriophage infection. De-ADP-ribosylates DNA (probably) modified on thymidine by its cognate toxin DarT, which neutralizes the activity of cognate toxin DarT. The protein is DNA ADP-ribosyl glycohydrolase of Mycobacterium bovis (strain BCG / Pasteur 1173P2).